The sequence spans 167 residues: NADH-quinone oxidoreductase subunit B 2 (167 aa).

Cys-38, Cys-39, Cys-103, and Cys-132 together coordinate [4Fe-4S] cluster.

The protein belongs to the complex I 20 kDa subunit family. In terms of assembly, NDH-1 is composed of 14 different subunits. Subunits NuoB, C, D, E, F, and G constitute the peripheral sector of the complex. [4Fe-4S] cluster is required as a cofactor.

The protein localises to the cell inner membrane. It catalyses the reaction a quinone + NADH + 5 H(+)(in) = a quinol + NAD(+) + 4 H(+)(out). NDH-1 shuttles electrons from NADH, via FMN and iron-sulfur (Fe-S) centers, to quinones in the respiratory chain. The immediate electron acceptor for the enzyme in this species is believed to be ubiquinone. Couples the redox reaction to proton translocation (for every two electrons transferred, four hydrogen ions are translocated across the cytoplasmic membrane), and thus conserves the redox energy in a proton gradient. This chain is NADH-quinone oxidoreductase subunit B 2, found in Rhizobium etli (strain CIAT 652).